The sequence spans 95 residues: Cell division topological specificity factor (95 aa).

Belongs to the MinE family.

In terms of biological role, prevents the cell division inhibition by proteins MinC and MinD at internal division sites while permitting inhibition at polar sites. This ensures cell division at the proper site by restricting the formation of a division septum at the midpoint of the long axis of the cell. The protein is Cell division topological specificity factor of Methylorubrum extorquens (strain PA1) (Methylobacterium extorquens).